The following is a 93-amino-acid chain: NADH-ubiquinone oxidoreductase chain 4L (93 aa).

A run of 3 helical transmembrane segments spans residues 1 to 21 (MVWMKFLGVLLMSMGCFVIFR), 29 to 49 (LFVGLEMMSLGLLFVTHVFLM), and 54 to 74 (LILLILCLAVCEASICLALLV).

This sequence belongs to the complex I subunit 4L family.

The protein resides in the mitochondrion membrane. The catalysed reaction is a ubiquinone + NADH + 5 H(+)(in) = a ubiquinol + NAD(+) + 4 H(+)(out). Its function is as follows. Core subunit of the mitochondrial membrane respiratory chain NADH dehydrogenase (Complex I) that is believed to belong to the minimal assembly required for catalysis. Complex I functions in the transfer of electrons from NADH to the respiratory chain. The immediate electron acceptor for the enzyme is believed to be ubiquinone. The sequence is that of NADH-ubiquinone oxidoreductase chain 4L (ND4L) from Mytilus edulis (Blue mussel).